The primary structure comprises 292 residues: Acetyl-coenzyme A carboxylase carboxyl transferase subunit beta (292 aa).

The CoA carboxyltransferase N-terminal domain occupies 36 to 292 (MWSKCEKCAK…LLRMHEVDYE (257 aa)). Residues Cys-40, Cys-43, Cys-59, and Cys-62 each coordinate Zn(2+). The C4-type zinc finger occupies 40–62 (CEKCAKILYTEDLRENFNVCPNC).

The protein belongs to the AccD/PCCB family. Acetyl-CoA carboxylase is a heterohexamer composed of biotin carboxyl carrier protein (AccB), biotin carboxylase (AccC) and two subunits each of ACCase subunit alpha (AccA) and ACCase subunit beta (AccD). Zn(2+) is required as a cofactor.

It is found in the cytoplasm. It carries out the reaction N(6)-carboxybiotinyl-L-lysyl-[protein] + acetyl-CoA = N(6)-biotinyl-L-lysyl-[protein] + malonyl-CoA. The protein operates within lipid metabolism; malonyl-CoA biosynthesis; malonyl-CoA from acetyl-CoA: step 1/1. Component of the acetyl coenzyme A carboxylase (ACC) complex. Biotin carboxylase (BC) catalyzes the carboxylation of biotin on its carrier protein (BCCP) and then the CO(2) group is transferred by the transcarboxylase to acetyl-CoA to form malonyl-CoA. This Clostridium perfringens (strain ATCC 13124 / DSM 756 / JCM 1290 / NCIMB 6125 / NCTC 8237 / Type A) protein is Acetyl-coenzyme A carboxylase carboxyl transferase subunit beta.